The chain runs to 239 residues: Small ribosomal subunit protein uS3c (239 aa).

Residues 43-139 (IKNYIQKNRK…RLNISIEKVK (97 aa)) enclose the KH type-2 domain. The interval 50-80 (NRKKGSNRKIESDSSSEVITHNRKTDSGSSS) is disordered.

Belongs to the universal ribosomal protein uS3 family. As to quaternary structure, part of the 30S ribosomal subunit.

It localises to the plastid. It is found in the chloroplast. In Agrostis stolonifera (Creeping bentgrass), this protein is Small ribosomal subunit protein uS3c (rps3).